We begin with the raw amino-acid sequence, 456 residues long: uncharacterized protein (456 aa).

Basic and acidic residues-rich tracts occupy residues 181 to 210 and 217 to 231; these read DQRK…DKKV and KEIE…ENEE. Residues 181 to 231 form a disordered region; it reads DQRKESIVNDERKKNPEFREKPDKNEDKKVKPPPSLKEIENKGIDHEENEE. Positions 216-248 form a coiled coil; that stretch reads LKEIENKGIDHEENEEDKKRELMFKLQLLQKQY. A helical membrane pass occupies residues 347-365; it reads LALAILFNAVWFIAAKMIM. The segment covering 383 to 407 has biased composition (polar residues); sequence NKSGTTPNSVSPRTWGNSKSPQSEF. The tract at residues 383-456 is disordered; the sequence is NKSGTTPNSV…MREQGIETLK (74 aa). A compositionally biased stretch (basic and acidic residues) spans 441–456; that stretch reads DESRREMREQGIETLK.

It belongs to the IIV-6 067R family.

Its subcellular location is the membrane. This is an uncharacterized protein from Invertebrate iridescent virus 6 (IIV-6).